Consider the following 354-residue polypeptide: Peptide chain release factor 1 (354 aa).

Gln233 is modified (N5-methylglutamine).

Belongs to the prokaryotic/mitochondrial release factor family. Post-translationally, methylated by PrmC. Methylation increases the termination efficiency of RF1.

It localises to the cytoplasm. Functionally, peptide chain release factor 1 directs the termination of translation in response to the peptide chain termination codons UAG and UAA. The sequence is that of Peptide chain release factor 1 from Clostridioides difficile (strain 630) (Peptoclostridium difficile).